The chain runs to 122 residues: Small ribosomal subunit protein uS13 (122 aa).

Residues 97 to 122 (PVRGQRTRTNARTRKGPRKTVAKKKK) form a disordered region. The segment covering 101–122 (QRTRTNARTRKGPRKTVAKKKK) has biased composition (basic residues).

It belongs to the universal ribosomal protein uS13 family. In terms of assembly, part of the 30S ribosomal subunit. Forms a loose heterodimer with protein S19. Forms two bridges to the 50S subunit in the 70S ribosome.

In terms of biological role, located at the top of the head of the 30S subunit, it contacts several helices of the 16S rRNA. In the 70S ribosome it contacts the 23S rRNA (bridge B1a) and protein L5 of the 50S subunit (bridge B1b), connecting the 2 subunits; these bridges are implicated in subunit movement. Contacts the tRNAs in the A and P-sites. This is Small ribosomal subunit protein uS13 from Caldanaerobacter subterraneus subsp. tengcongensis (strain DSM 15242 / JCM 11007 / NBRC 100824 / MB4) (Thermoanaerobacter tengcongensis).